Consider the following 358-residue polypeptide: Phospho-N-acetylmuramoyl-pentapeptide-transferase (358 aa).

The next 10 helical transmembrane spans lie at 24–44, 73–93, 95–115, 134–154, 169–189, 197–217, 233–253, 261–281, 286–306, and 335–355; these read FRSIYAMITALLLAFIVGPWV, TMGGVLILVCIVLPTLLWADL, NVFIWLTLLIIVGYGVLGFVD, MFWQMLLAAGVGIFLFYLPGF, ELGILFIPFVMLVIVGASNAV, GLAIGPVAINAATYLLFCYIA, GAGELAVLCGAMVGAGLGFLW, VFMGDVGSLSLGGALGTLAVL, ILLVIVGGVFVVEALSVIFQV, and KIIVRFWIITIILALVAISTL.

Belongs to the glycosyltransferase 4 family. MraY subfamily. Requires Mg(2+) as cofactor.

The protein localises to the cell inner membrane. The catalysed reaction is UDP-N-acetyl-alpha-D-muramoyl-L-alanyl-gamma-D-glutamyl-meso-2,6-diaminopimeloyl-D-alanyl-D-alanine + di-trans,octa-cis-undecaprenyl phosphate = di-trans,octa-cis-undecaprenyl diphospho-N-acetyl-alpha-D-muramoyl-L-alanyl-D-glutamyl-meso-2,6-diaminopimeloyl-D-alanyl-D-alanine + UMP. Its pathway is cell wall biogenesis; peptidoglycan biosynthesis. Functionally, catalyzes the initial step of the lipid cycle reactions in the biosynthesis of the cell wall peptidoglycan: transfers peptidoglycan precursor phospho-MurNAc-pentapeptide from UDP-MurNAc-pentapeptide onto the lipid carrier undecaprenyl phosphate, yielding undecaprenyl-pyrophosphoryl-MurNAc-pentapeptide, known as lipid I. The chain is Phospho-N-acetylmuramoyl-pentapeptide-transferase from Citrifermentans bemidjiense (strain ATCC BAA-1014 / DSM 16622 / JCM 12645 / Bem) (Geobacter bemidjiensis).